The following is a 363-amino-acid chain: Peptide chain release factor 2 (363 aa).

Position 251 is an N5-methylglutamine (Gln251).

The protein belongs to the prokaryotic/mitochondrial release factor family. Post-translationally, methylated by PrmC. Methylation increases the termination efficiency of RF2.

The protein resides in the cytoplasm. In terms of biological role, peptide chain release factor 2 directs the termination of translation in response to the peptide chain termination codons UGA and UAA. The protein is Peptide chain release factor 2 of Helicobacter pylori (strain HPAG1).